The primary structure comprises 107 residues: Acidic phospholipase A2 2 (107 aa).

Cystine bridges form between cysteine 26–cysteine 100, cysteine 28–cysteine 38, cysteine 37–cysteine 82, cysteine 43–cysteine 107, cysteine 44–cysteine 75, and cysteine 62–cysteine 73. Ca(2+) is bound by residues tyrosine 27, glycine 29, and glycine 31. Residue histidine 41 is part of the active site. Aspartate 42 contributes to the Ca(2+) binding site. The active site involves aspartate 76.

The cofactor is Ca(2+). As to expression, expressed by the venom gland.

Its subcellular location is the secreted. The enzyme catalyses a 1,2-diacyl-sn-glycero-3-phosphocholine + H2O = a 1-acyl-sn-glycero-3-phosphocholine + a fatty acid + H(+). In terms of biological role, PLA2 catalyzes the calcium-dependent hydrolysis of the 2-acyl groups in 3-sn-phosphoglycerides. This is Acidic phospholipase A2 2 from Bothrops insularis (Golden lancehead).